The chain runs to 859 residues: Low-density lipoprotein receptor-related protein 12 (859 aa).

The N-terminal stretch at 1 to 32 (MACRWSTKESPRWRSALLLLFLAGVYGNGALA) is a signal peptide. The Extracellular portion of the chain corresponds to 33 to 492 (EHSENVHISG…ENCPVIVPTR (460 aa)). Intrachain disulfides connect Cys47-Cys76 and Cys103-Cys122. One can recognise a CUB 1 domain in the interval 47–159 (CGETPEQIRA…KGFRLAYFSG (113 aa)). Asn75 carries N-linked (GlcNAc...) asparagine glycosylation. N-linked (GlcNAc...) asparagine glycosylation occurs at Asn146. LDL-receptor class A domains follow at residues 165 to 201 (NCACDQFRCGNGKCIPEAWKCNNMDECGDSSDEEICA) and 214 to 255 (PCAY…IDCD). 7 disulfide bridges follow: Cys166–Cys178, Cys173–Cys191, Cys185–Cys200, Cys215–Cys232, Cys222–Cys245, Cys239–Cys254, and Cys259–Cys285. In terms of domain architecture, CUB 2 spans 259 to 372 (CGQWLKYFYG…RGFNATYQVD (114 aa)). N-linked (GlcNAc...) asparagine glycosylation is found at Asn284 and Asn366. LDL-receptor class A domains follow at residues 374 to 411 (FCLPWEIPCGGNWGCYTEQQRCDGYWHCPNGRDETNCT), 412 to 449 (MCQKEEFPCSRNGVCYPRSDRCNYQNHCPNGSDEKNCF), and 450 to 486 (FCQPGNFHCKNNRCVFESWVCDSQDDCGDGSDEENCP). Cystine bridges form between Cys375/Cys388, Cys382/Cys401, Cys395/Cys410, Cys413/Cys426, Cys420/Cys439, Cys433/Cys448, Cys451/Cys463, Cys458/Cys476, and Cys470/Cys485. Asn409 carries an N-linked (GlcNAc...) asparagine glycan. Asn441 carries an N-linked (GlcNAc...) asparagine glycan. The helical transmembrane segment at 493-513 (VITAAVIGSLICGLLLVIALG) threads the bilayer. Topologically, residues 514–859 (CTCKLYSLRM…TSDDEALLLC (346 aa)) are cytoplasmic. Disordered regions lie at residues 623 to 678 (ADGD…LPQK), 693 to 723 (ASSSTQSTRGGHADNGRDVTSVEPPSVSPAR), 748 to 770 (SSLSQNQSPLRQLDNGVSGREDD), and 801 to 823 (DQGQGLRQPYNATNPGVRPSNRD). Composition is skewed to polar residues over residues 748 to 757 (SSLSQNQSPL) and 801 to 814 (DQGQGLRQPYNATN).

It belongs to the LDLR family. May interact with RACK1, ZFYVE9 and NMRK2. As to expression, widely expressed in heart, skeletal muscle, brain, lung, placenta and pancreas, but not in tissues consisting of a large number of epithelial cells, such as liver and kidney. Expressed at very low levels in a number of tumor-derived cell lines.

The protein resides in the membrane. It localises to the coated pit. In terms of biological role, probable receptor, which may be involved in the internalization of lipophilic molecules and/or signal transduction. May act as a tumor suppressor. This Homo sapiens (Human) protein is Low-density lipoprotein receptor-related protein 12 (LRP12).